We begin with the raw amino-acid sequence, 503 residues long: Aromatase (503 aa).

The next 2 helical transmembrane spans lie at 19-39 (EVVP…LLVW) and 53-73 (FLGI…IGSA). The substrate site is built by Asp309 and Met374. Cys437 contacts heme.

Belongs to the cytochrome P450 family. Heme is required as a cofactor.

The protein resides in the endoplasmic reticulum membrane. The protein localises to the microsome membrane. It catalyses the reaction testosterone + 3 reduced [NADPH--hemoprotein reductase] + 3 O2 = 17beta-estradiol + formate + 3 oxidized [NADPH--hemoprotein reductase] + 4 H2O + 4 H(+). The catalysed reaction is androst-4-ene-3,17-dione + 3 reduced [NADPH--hemoprotein reductase] + 3 O2 = estrone + formate + 3 oxidized [NADPH--hemoprotein reductase] + 4 H2O + 4 H(+). The enzyme catalyses androst-4-ene-3,17-dione + reduced [NADPH--hemoprotein reductase] + O2 = 19-hydroxyandrost-4-ene-3,17-dione + oxidized [NADPH--hemoprotein reductase] + H2O + H(+). It carries out the reaction 19-hydroxyandrost-4-ene-3,17-dione + reduced [NADPH--hemoprotein reductase] + O2 = 19-oxo-androst-4-ene-3,17-dione + oxidized [NADPH--hemoprotein reductase] + 2 H2O + H(+). It catalyses the reaction 19-oxo-androst-4-ene-3,17-dione + reduced [NADPH--hemoprotein reductase] + O2 = estrone + formate + oxidized [NADPH--hemoprotein reductase] + H2O + 2 H(+). The catalysed reaction is estrone + reduced [NADPH--hemoprotein reductase] + O2 = 2-hydroxyestrone + oxidized [NADPH--hemoprotein reductase] + H2O + H(+). The enzyme catalyses 17beta-hydroxy-5alpha-androstan-3-one + reduced [NADPH--hemoprotein reductase] + O2 = 17beta,19-dihydroxy-3-oxo-5alpha-androstanone + oxidized [NADPH--hemoprotein reductase] + H2O + H(+). It carries out the reaction 17beta,19-dihydroxy-3-oxo-5alpha-androstanone + reduced [NADPH--hemoprotein reductase] + O2 = 17beta-hydroxy-3,19-dioxo-5alpha-androstanone + oxidized [NADPH--hemoprotein reductase] + 2 H2O + H(+). It catalyses the reaction 17beta-hydroxy-3,19-dioxo-5alpha-androstanone + reduced [NADPH--hemoprotein reductase] + O2 = 17beta-hydroxy-3-oxo-19-nor-5alpha-androst-1-ene + formate + oxidized [NADPH--hemoprotein reductase] + H2O + 2 H(+). It functions in the pathway steroid hormone biosynthesis. Functionally, a cytochrome P450 monooxygenase that catalyzes the conversion of C19 androgens, androst-4-ene-3,17-dione (androstenedione) and testosterone to the C18 estrogens, estrone and estradiol, respectively. Catalyzes three successive oxidations of C19 androgens: two conventional oxidations at C19 yielding 19-hydroxy and 19-oxo/19-aldehyde derivatives, followed by a third oxidative aromatization step that involves C1-beta hydrogen abstraction combined with cleavage of the C10-C19 bond to yield a phenolic A ring and formic acid. Alternatively, the third oxidative reaction yields a 19-norsteroid and formic acid. Converts dihydrotestosterone to delta1,10-dehydro 19-nordihydrotestosterone and may play a role in homeostasis of this potent androgen. Also displays 2-hydroxylase activity toward estrone. Mechanistically, uses molecular oxygen inserting one oxygen atom into a substrate, and reducing the second into a water molecule, with two electrons provided by NADPH via cytochrome P450 reductase (CPR; NADPH-ferrihemoprotein reductase). In Bos taurus (Bovine), this protein is Aromatase (CYP19A1).